A 137-amino-acid chain; its full sequence is Type III secretion protein HrcQb (137 aa).

The span at 1–22 (MSTEDLYQDDVESLEDYDDETA) shows a compositional bias: acidic residues. A disordered region spans residues 1–67 (MSTEDLYQDD…EQQAPSGLDS (67 aa)). Positions 23 to 33 (EQEHEHEHEQQ) are enriched in basic and acidic residues. A compositionally biased stretch (acidic residues) spans 36–58 (EPDDESEYAEAEPDDDEQEEQEE).

The protein belongs to the FliN/MopA/SpaO family. In terms of assembly, homotetramer. The four monomers assemble into two tightly bound homodimers. Interacts with HrcQa.

It localises to the cytoplasm. Its function is as follows. Component of the type III secretion system, which is required for effector protein delivery, parasitism, and pathogenicity. Probably participates in the formation of a C-ring-like assembly along with HrcQa. This is Type III secretion protein HrcQb (hrcQb) from Pseudomonas syringae pv. tomato (strain ATCC BAA-871 / DC3000).